An 824-amino-acid polypeptide reads, in one-letter code: U-box domain-containing protein 24 (824 aa).

A U-box domain is found at 13 to 92; sequence GAFEAFVCPL…HEWRARNEEK (80 aa). ARM repeat units follow at residues 133–172, 175–214, 217–258, 260–299, 300–339, 341–385, 396–435, 441–481, and 486–525; these read AASKDLVRRRGVLRAVAEMLKSGSRRLRLKSLQVLRVLVE, DDNKEELGKGDTIRTIIKFLSNEHVQERELAVSLLHELSG, PTCE…NLDR, DANVKQMADNGRLQPLLTRLLRGEPDTRVAMADYLGELAL, ANDDKAAVAEQAGPLLVGMLRTGATPAKEATLKALREISS, EASA…NLVA, DDDEDDDGGGGGRGRRRTLLSEDVVHSQLHLISNTGPAIG, VLAG…DIRV, and LLRNLAPYMGAELADALGGSLSSLLRAISSDGGGVTEEQA.

In terms of assembly, interacts with BZR1, BZR2, BZR3 and GSK2. Post-translationally, auto-ubiquitinated. In terms of processing, phosphorylated by GSK2. Phosphorylation of PUB24 increases its cellular stability.

It localises to the cytoplasm. Its subcellular location is the cytosol. The protein localises to the nucleus. The enzyme catalyses S-ubiquitinyl-[E2 ubiquitin-conjugating enzyme]-L-cysteine + [acceptor protein]-L-lysine = [E2 ubiquitin-conjugating enzyme]-L-cysteine + N(6)-ubiquitinyl-[acceptor protein]-L-lysine.. The protein operates within protein modification; protein ubiquitination. E3 ubiquitin-protein ligase that functions as a negative regulator of brassinosteroid (BR) signaling. Targets BZR1, a positive regulator of BR signaling pathway, and promotes its degradation via the ubiquitin-26S proteasome pathway. The protein is U-box domain-containing protein 24 of Oryza sativa subsp. japonica (Rice).